Reading from the N-terminus, the 182-residue chain is MTSNLNLMAPPRGWEAKYESDGGGVITTSVDQTVNWLLNWGRSNSVWYMLFGLACCAIELMQTGGPRGDLERFGAAPRPSPRSSDLFIIAGTLTYKMATRVKRLYDQMSEPRFVISMGSCSNCGGLFQYAYSVCKGVDQIIPVDVYVPGCPPRPEALLEGLLKIQEKIKSERALGRRGATGG.

The [4Fe-4S] cluster site is built by cysteine 55, cysteine 56, cysteine 120, and cysteine 150.

It belongs to the complex I 20 kDa subunit family. As to quaternary structure, NDH-1 is composed of 14 different subunits. Subunits NuoB, C, D, E, F, and G constitute the peripheral sector of the complex. It depends on [4Fe-4S] cluster as a cofactor.

It localises to the cell inner membrane. The catalysed reaction is a quinone + NADH + 5 H(+)(in) = a quinol + NAD(+) + 4 H(+)(out). NDH-1 shuttles electrons from NADH, via FMN and iron-sulfur (Fe-S) centers, to quinones in the respiratory chain. The immediate electron acceptor for the enzyme in this species is believed to be ubiquinone. Couples the redox reaction to proton translocation (for every two electrons transferred, four hydrogen ions are translocated across the cytoplasmic membrane), and thus conserves the redox energy in a proton gradient. The polypeptide is NADH-quinone oxidoreductase subunit B 2 (Sorangium cellulosum (strain So ce56) (Polyangium cellulosum (strain So ce56))).